A 197-amino-acid polypeptide reads, in one-letter code: Ribonuclease HII (197 aa).

The RNase H type-2 domain occupies 9-197; sequence ELIAGVDEVG…APVKKALEQF (189 aa). A divalent metal cation contacts are provided by Asp15, Glu16, and Asp107.

It belongs to the RNase HII family. It depends on Mn(2+) as a cofactor. Requires Mg(2+) as cofactor.

Its subcellular location is the cytoplasm. The catalysed reaction is Endonucleolytic cleavage to 5'-phosphomonoester.. Functionally, endonuclease that specifically degrades the RNA of RNA-DNA hybrids. The sequence is that of Ribonuclease HII from Haemophilus influenzae (strain 86-028NP).